Here is a 581-residue protein sequence, read N- to C-terminus: Sabinene synthase 1, chloroplastic (581 aa).

The N-terminal 28 residues, 1 to 28, are a transit peptide targeting the chloroplast; it reads MPLNSLHNLERKPSKAWSTSCTAPAARL. (2E)-geranyl diphosphate is bound by residues Arg-297, Asp-334, Asp-338, Arg-475, and Asp-478. Mg(2+)-binding residues include Asp-334 and Asp-338. Residues 334-338 carry the DDXXD motif motif; that stretch reads DDVYD. 3 residues coordinate Mg(2+): Asp-478, Thr-482, and Glu-486.

The protein belongs to the terpene synthase family. Tpsb subfamily. Mg(2+) serves as cofactor. Mn(2+) is required as a cofactor.

Its subcellular location is the plastid. It is found in the chloroplast. It carries out the reaction (2E)-geranyl diphosphate = sabinene + diphosphate. The enzyme catalyses (2E)-geranyl diphosphate = beta-myrcene + diphosphate. Its pathway is secondary metabolite biosynthesis; terpenoid biosynthesis. Monoterpene synthase (TPS) involved in the biosynthesis of monoterpene natural products, components of the chemical defense arsenal. Catalyzes the conversion of (2E)-geranyl diphosphate (GPP) into sabinene, and, as minor products, myrcene. The protein is Sabinene synthase 1, chloroplastic of Salvia pomifera (Apple sage).